The primary structure comprises 402 residues: Multidrug resistance protein MdtH (402 aa).

At 1-12 the chain is on the cytoplasmic side; it reads MSRVSQARNLGK. Residues 13 to 33 form a helical membrane-spanning segment; sequence YFLLIDNMLVVLGFFVVFPLI. Residues 34–98 lie on the Periplasmic side of the membrane; it reads SIRFVDQMGW…GFATMGIAHE (65 aa). Residues 99–116 form a helical membrane-spanning segment; the sequence is PWLLWFSCLLSGLGGTLF. The Cytoplasmic segment spans residues 117-138; it reads DPPRSALVVKLIRPQQRGRFFS. The helical transmembrane segment at 139–159 threads the bilayer; the sequence is LLMMQDSAGAVIGALLGSWLL. The Periplasmic portion of the chain corresponds to 160–164; sequence QYDFR. The helical transmembrane segment at 165–185 threads the bilayer; that stretch reads LVCATGAVLFVLCAAFNAWLL. At 186-213 the chain is on the cytoplasmic side; that stretch reads PAWKLSTVRTPVREGMTRVMRDKRFVTY. The chain crosses the membrane as a helical span at residues 214–234; it reads VLTLAGYYMLAVQVMLMLPIM. The Periplasmic segment spans residues 235–243; that stretch reads VNDVAGAPS. The helical transmembrane segment at 244–264 threads the bilayer; sequence AVKWMYAIEACLSLTLLYPIA. Residues 265–276 are Cytoplasmic-facing; sequence RWSEKHFRLEHR. A helical transmembrane segment spans residues 277-297; sequence LMAGLLIMSLSMMPVGMVSGL. At 298 to 299 the chain is on the periplasmic side; that stretch reads QQ. A helical transmembrane segment spans residues 300–320; that stretch reads LFTLICLFYIGSIIAEPARET. Topologically, residues 321-339 are cytoplasmic; that stretch reads LSASLADARARGSYMGFSR. The helical transmembrane segment at 340 to 360 threads the bilayer; sequence LGLAIGGAIGYIGGGWLFDLG. The Periplasmic segment spans residues 361–367; sequence KSVHQPE. The helical transmembrane segment at 368 to 388 threads the bilayer; the sequence is LPWMMLGIIGIFTFLALGWQF. Topologically, residues 389–402 are cytoplasmic; that stretch reads SQKRAARRLLERDA.

It belongs to the major facilitator superfamily. DHA1 family. MdtH (TC 2.A.1.2.21) subfamily.

It is found in the cell inner membrane. Its function is as follows. Confers resistance to norfloxacin and enoxacin. This Escherichia coli O157:H7 protein is Multidrug resistance protein MdtH.